We begin with the raw amino-acid sequence, 506 residues long: Maturase K (506 aa).

This sequence belongs to the intron maturase 2 family. MatK subfamily.

The protein resides in the plastid. The protein localises to the chloroplast. In terms of biological role, usually encoded in the trnK tRNA gene intron. Probably assists in splicing its own and other chloroplast group II introns. This chain is Maturase K, found in Atractylodes lancea (Atractylodes japonica).